We begin with the raw amino-acid sequence, 98 residues long: MGNTKTKDRQYQSNSSQPTNTSAPVLLRRQAEPSLYGRHNCRCCWFADTNLVNCSNHYLCLKCLNTMLRRSNLCDICGEELPTTIIVPVEPSAPLPGQ.

The segment covering 1 to 10 has biased composition (basic and acidic residues); that stretch reads MGNTKTKDRQ. The tract at residues 1–26 is disordered; that stretch reads MGNTKTKDRQYQSNSSQPTNTSAPVL. Gly2 is lipidated: N-myristoyl glycine; by host. Residues 11–23 are compositionally biased toward polar residues; it reads YQSNSSQPTNTSA. An RING-type; atypical zinc finger spans residues 41 to 77; it reads CRCCWFADTNLVNCSNHYLCLKCLNTMLRRSNLCDIC. A PTAP/PSAP motif motif is present at residues 91–94; that stretch reads PSAP.

The protein belongs to the arenaviridae Z protein family. Interacts with protein NP; this interaction probably directs the encapsidated genome to budding sites. Interacts (via RING domain) with polymerase L; this interaction inhibits viral transcription and replication, Z partially blocks the product exit tunnel for the releasing nascent RNA product. Interacts with the glycoprotein complex; this interaction plays a role in virion budding. Interacts with host eIF4E; this interaction results in eIF4E reduced affinity for its substrate, the 5'-m7 G cap structure. Interacts (via late-budding domain) with host TSG101; this interaction is essential for budding and release of viral particles. Interacts with host RPLP0; this interaction may serve to load ribosome-like particles inside the virion. Interacts with host PML; this interaction induces PML bodies redistribution in the cytoplasm upon viral infection. In terms of processing, myristoylation is required for the role of RING finger protein Z in assembly and budding.

Its subcellular location is the virion. The protein localises to the host cytoplasm. It localises to the host perinuclear region. The protein resides in the host cell membrane. In terms of biological role, plays a crucial role in virion assembly and budding. Expressed late in the virus life cycle, it acts as an inhibitor of viral transcription and RNA synthesis by interacting with the viral polymerase L. Presumably recruits the NP encapsidated genome to cellular membranes at budding sites via direct interaction with NP. Plays critical roles in the final steps of viral release by interacting with host TSG101, a member of the vacuolar protein-sorting pathway and using other cellular host proteins involved in vesicle formation pathway. The budding of the virus progeny occurs after association of protein Z with the viral glycoprotein complex SSP-GP1-GP2 at the cell periphery, step that requires myristoylation of protein Z. Also selectively represses protein production by associating with host eIF4E. In cell-based minigenome assay, has an inhibitory effect on the ribonucleoprotein machinery (vRNP), which is responsible for the replication and transcription of the viral genome. The polypeptide is RING finger protein Z (Chapare mammarenavirus (isolate Human/Bolivia/810419/2003)).